Reading from the N-terminus, the 474-residue chain is Glutamine synthetase (474 aa).

Positions 14-99 constitute a GS beta-grasp domain; sequence EKIELIDLKF…VCSIKEPRTG (86 aa). The 369-residue stretch at 106-474 folds into the GS catalytic domain; the sequence is PRVIAQKAID…PYEFSIYYDV (369 aa). Residues E131 and E133 each coordinate Mg(2+). Residue E211 coordinates ATP. Positions 216 and 224 each coordinate Mg(2+). Residues 268–269 and G269 each bind L-glutamate; that span reads NG. Position 273 (H273) interacts with Mg(2+). ATP is bound by residues 275-277 and S277; that span reads HQS. Residues R325, E331, and R343 each contribute to the L-glutamate site. 3 residues coordinate ATP: R343, R348, and K357. E362 is a Mg(2+) binding site. R364 contributes to the L-glutamate binding site. Position 402 is an O-AMP-tyrosine (Y402).

It belongs to the glutamine synthetase family. As to quaternary structure, oligomer of 12 subunits arranged in the form of two hexagons. Mg(2+) is required as a cofactor.

The protein resides in the cytoplasm. The enzyme catalyses L-glutamate + NH4(+) + ATP = L-glutamine + ADP + phosphate + H(+). With respect to regulation, the activity of this enzyme could be controlled by adenylation under conditions of abundant glutamine. Functionally, involved in nitrogen metabolism via ammonium assimilation. Catalyzes the ATP-dependent biosynthesis of glutamine from glutamate and ammonia. In Nostoc sp. (strain PCC 7120 / SAG 25.82 / UTEX 2576), this protein is Glutamine synthetase.